The chain runs to 59 residues: Putative potassium channel toxin Ts24 (59 aa).

The first 22 residues, methionine 1–glutamine 22, serve as a signal peptide directing secretion. Cystine bridges form between cysteine 29-cysteine 50, cysteine 35-cysteine 55, and cysteine 39-cysteine 57.

This sequence belongs to the short scorpion toxin superfamily. Potassium channel inhibitor family. Alpha-KTx 04 subfamily. Expressed by the venom gland.

It localises to the secreted. Functionally, potently blocks Kv1.1/KCNA1 (85%), Kv1.2/KCNA2 (91%), Kv1.3/KCNA3 (89%), Kv1.6/KCNA6 (94%), and Shaker (97%). In Tityus serrulatus (Brazilian scorpion), this protein is Putative potassium channel toxin Ts24.